Consider the following 132-residue polypeptide: Fluoride-specific ion channel FluC (132 aa).

Helical transmembrane passes span 5–25, 32–52, 70–90, and 105–125; these read LYIALGGALGSVGRFALSGLV, TFPWGTLVVNVVGSFIIGFFA, FVMTGVLGGFTTFSSFSLQTL, and VVGSLVLCLVAVWLGHIAAVG. The Na(+) site is built by G77 and T80.

The protein belongs to the fluoride channel Fluc/FEX (TC 1.A.43) family.

Its subcellular location is the cell inner membrane. It catalyses the reaction fluoride(in) = fluoride(out). With respect to regulation, na(+) is not transported, but it plays an essential structural role and its presence is essential for fluoride channel function. In terms of biological role, fluoride-specific ion channel. Important for reducing fluoride concentration in the cell, thus reducing its toxicity. The protein is Fluoride-specific ion channel FluC of Opitutus terrae (strain DSM 11246 / JCM 15787 / PB90-1).